The chain runs to 64 residues: Large ribosomal subunit protein bL35 (64 aa).

It belongs to the bacterial ribosomal protein bL35 family.

This is Large ribosomal subunit protein bL35 from Carboxydothermus hydrogenoformans (strain ATCC BAA-161 / DSM 6008 / Z-2901).